We begin with the raw amino-acid sequence, 233 residues long: Charged multivesicular body protein 4c (233 aa).

Disordered stretches follow at residues Met1 to Glu24 and Gln173 to Thr233. The tract at residues Met1 to Val153 is intramolecular interaction with C-terminus. Residues Leu125–Ile183 adopt a coiled-coil conformation. Positions Gly154 to Thr233 are intramolecular interaction with N-terminus. Low complexity predominate over residues Ser204–Gln216. At Ser210 the chain carries Phosphoserine; by AURKB.

The protein belongs to the SNF7 family. As to quaternary structure, probable core component of the endosomal sorting required for transport complex III (ESCRT-III). ESCRT-III components are thought to multimerize to form a flat lattice on the perimeter membrane of the endosome. Several assembly forms of ESCRT-III may exist that interact and act sequentially. Self-associates. Interacts with CHMP2A. Interacts with CHMP4A. Interacts with CHMP4B. Interacts with CHMP6. Interacts with VPS4A. Interacts with PDCD6IP; the interaction is direct. Post-translationally, phosphorylated at Ser-210 by AURKB during cytokinesis: together with ZFYVE19/ANCHR, phosphorylated CHMP4C retains abscission-competent VPS4 (VPS4A and/or VPS4B) at the midbody ring until abscission checkpoint signaling is terminated at late cytokinesis. Expressed in heart, spleen and kidney.

It is found in the cytoplasm. The protein localises to the cytosol. Its subcellular location is the late endosome membrane. It localises to the midbody. The protein resides in the midbody ring. Functionally, probable core component of the endosomal sorting required for transport complex III (ESCRT-III) which is involved in multivesicular bodies (MVBs) formation and sorting of endosomal cargo proteins into MVBs. MVBs contain intraluminal vesicles (ILVs) that are generated by invagination and scission from the limiting membrane of the endosome and mostly are delivered to lysosomes enabling degradation of membrane proteins, such as stimulated growth factor receptors, lysosomal enzymes and lipids. The MVB pathway appears to require the sequential function of ESCRT-O, -I,-II and -III complexes. ESCRT-III proteins mostly dissociate from the invaginating membrane before the ILV is released. The ESCRT machinery also functions in topologically equivalent membrane fission events, such as the terminal stages of cytokinesis and the budding of enveloped viruses (HIV-1 and other lentiviruses). Key component of the cytokinesis checkpoint, a process required to delay abscission to prevent both premature resolution of intercellular chromosome bridges and accumulation of DNA damage: upon phosphorylation by AURKB, together with ZFYVE19/ANCHR, retains abscission-competent VPS4 (VPS4A and/or VPS4B) at the midbody ring until abscission checkpoint signaling is terminated at late cytokinesis. Deactivation of AURKB results in dephosphorylation of CHMP4C followed by its dissociation from ANCHR and VPS4 and subsequent abscission. ESCRT-III proteins are believed to mediate the necessary vesicle extrusion and/or membrane fission activities, possibly in conjunction with the AAA ATPase VPS4. Involved in HIV-1 p6- and p9-dependent virus release. CHMP4A/B/C are required for the exosomal release of SDCBP, CD63 and syndecan. The sequence is that of Charged multivesicular body protein 4c (CHMP4C) from Homo sapiens (Human).